The primary structure comprises 445 residues: Lipid A 1-phosphatase (445 aa).

Positions 1–22 are cleaved as a signal peptide; sequence MNRESFLLLLVLLFALPLHLQA.

Its subcellular location is the periplasm. The protein operates within bacterial outer membrane biogenesis; LPS lipid A biosynthesis. Its function is as follows. Removes the 1-phosphate group from lipid A species. Absence of phosphate groups in lipid A renders the bacteria resistant to host-derived cationic antimicrobial peptides (CAMP) and allowing it to camouflage itself from the host innate immune response. This Porphyromonas gingivalis (strain ATCC 33277 / DSM 20709 / CIP 103683 / JCM 12257 / NCTC 11834 / 2561) protein is Lipid A 1-phosphatase.